We begin with the raw amino-acid sequence, 952 residues long: Translation initiation factor IF-2 (952 aa).

Disordered stretches follow at residues 74 to 95 (QRRL…RQLK), 153 to 204 (AAQA…KEEP), 230 to 256 (MHSP…EQAD), and 273 to 319 (DEKG…DVND). Over residues 153 to 168 (AAQADQTDQTDQTDQA) the composition is skewed to low complexity. Residues 232-242 (SPFDRSSEAER) are compositionally biased toward basic and acidic residues. A compositionally biased stretch (low complexity) spans 286–303 (PGETNAATPAGTASTAGA). Residues 449 to 619 (IRPPVITIMG…LAEAEIRELK (171 aa)) enclose the tr-type G domain. Positions 458 to 465 (GHVDHGKT) are G1. 458-465 (GHVDHGKT) contributes to the GTP binding site. The segment at 483-487 (GITQH) is G2. Residues 505–508 (DTPG) are G3. GTP contacts are provided by residues 505–509 (DTPGH) and 559–562 (NKVD). Residues 559–562 (NKVD) form a G4 region. A G5 region spans residues 595-597 (SAK).

This sequence belongs to the TRAFAC class translation factor GTPase superfamily. Classic translation factor GTPase family. IF-2 subfamily.

The protein resides in the cytoplasm. One of the essential components for the initiation of protein synthesis. Protects formylmethionyl-tRNA from spontaneous hydrolysis and promotes its binding to the 30S ribosomal subunits. Also involved in the hydrolysis of GTP during the formation of the 70S ribosomal complex. This chain is Translation initiation factor IF-2, found in Chlorobium limicola (strain DSM 245 / NBRC 103803 / 6330).